A 142-amino-acid chain; its full sequence is Small ribosomal subunit protein bS6 (142 aa).

Residues 96-142 are disordered; that stretch reads VTGQSEMLKAEENRSERRERRERPEHDGSADGDDSDSDSDNSDNADE. The span at 103 to 124 shows a compositional bias: basic and acidic residues; sequence LKAEENRSERRERRERPEHDGS. Positions 125 to 142 are enriched in acidic residues; sequence ADGDDSDSDSDNSDNADE.

Belongs to the bacterial ribosomal protein bS6 family.

Its function is as follows. Binds together with bS18 to 16S ribosomal RNA. This is Small ribosomal subunit protein bS6 from Pseudomonas fluorescens (strain Pf0-1).